A 338-amino-acid chain; its full sequence is Aspartate carbamoyltransferase catalytic subunit (338 aa).

Positions 72 and 73 each coordinate carbamoyl phosphate. An L-aspartate-binding site is contributed by K100. Residues R122, H152, and Q155 each contribute to the carbamoyl phosphate site. L-aspartate contacts are provided by R186 and R243. Carbamoyl phosphate is bound by residues G284 and P285.

This sequence belongs to the aspartate/ornithine carbamoyltransferase superfamily. ATCase family. Heterododecamer (2C3:3R2) of six catalytic PyrB chains organized as two trimers (C3), and six regulatory PyrI chains organized as three dimers (R2).

The catalysed reaction is carbamoyl phosphate + L-aspartate = N-carbamoyl-L-aspartate + phosphate + H(+). Its pathway is pyrimidine metabolism; UMP biosynthesis via de novo pathway; (S)-dihydroorotate from bicarbonate: step 2/3. In terms of biological role, catalyzes the condensation of carbamoyl phosphate and aspartate to form carbamoyl aspartate and inorganic phosphate, the committed step in the de novo pyrimidine nucleotide biosynthesis pathway. This chain is Aspartate carbamoyltransferase catalytic subunit, found in Acinetobacter baumannii (strain SDF).